Consider the following 364-residue polypeptide: Protein LATERAL BRANCHING OXIDOREDUCTASE 1 (364 aa).

The 110-residue stretch at 203–312 (RFEEMFGEAV…RLTIVTFYAP (110 aa)) folds into the Fe2OG dioxygenase domain. Fe cation is bound by residues His235, Asp237, and His293. Position 303 (Arg303) interacts with 2-oxoglutarate.

This sequence belongs to the iron/ascorbate-dependent oxidoreductase family. As to quaternary structure, monomer. It depends on Fe(2+) as a cofactor. Requires L-ascorbate as cofactor. Expressed in the vasculature throughout the plant and in the buds and root tips.

The protein resides in the cytoplasm. The enzyme catalyses (11R)-methyl carlactonoate + 2-oxoglutarate + O2 = (11R)-hydroxymethyl carlactonoate + succinate + CO2. In terms of biological role, oxoglutarate-dependent dioxygenase involved in the biosynthesis of strigolactone natural products, bioactive compounds promoting plant fitness and soil microbe interactions, but preventing shoot branching. Catalyzes the hydroxylation of (11R)-methyl carlactonoate (MeCLA) to produce (11R)-hydroxymethyl carlactonoate (1'-HO-MeCLA) in final stages of strigolactone biosynthesis, downstream of MAX1 and CLAMT. The protein is Protein LATERAL BRANCHING OXIDOREDUCTASE 1 of Arabidopsis thaliana (Mouse-ear cress).